A 476-amino-acid chain; its full sequence is Bifunctional protein HldE (476 aa).

Residues 1–318 (MKVTLPDFRR…ENAIRGRAET (318 aa)) are ribokinase. ATP is bound at residue 195 to 198 (NLSE). Asp-264 is a catalytic residue. Residues 344–476 (MTNGIFDILH…IIQSIKNGRG (133 aa)) are cytidylyltransferase.

This sequence in the N-terminal section; belongs to the carbohydrate kinase PfkB family. In the C-terminal section; belongs to the cytidylyltransferase family. As to quaternary structure, homodimer.

It carries out the reaction D-glycero-beta-D-manno-heptose 7-phosphate + ATP = D-glycero-beta-D-manno-heptose 1,7-bisphosphate + ADP + H(+). The enzyme catalyses D-glycero-beta-D-manno-heptose 1-phosphate + ATP + H(+) = ADP-D-glycero-beta-D-manno-heptose + diphosphate. The protein operates within nucleotide-sugar biosynthesis; ADP-L-glycero-beta-D-manno-heptose biosynthesis; ADP-L-glycero-beta-D-manno-heptose from D-glycero-beta-D-manno-heptose 7-phosphate: step 1/4. It functions in the pathway nucleotide-sugar biosynthesis; ADP-L-glycero-beta-D-manno-heptose biosynthesis; ADP-L-glycero-beta-D-manno-heptose from D-glycero-beta-D-manno-heptose 7-phosphate: step 3/4. Its function is as follows. Catalyzes the phosphorylation of D-glycero-D-manno-heptose 7-phosphate at the C-1 position to selectively form D-glycero-beta-D-manno-heptose-1,7-bisphosphate. Catalyzes the ADP transfer from ATP to D-glycero-beta-D-manno-heptose 1-phosphate, yielding ADP-D-glycero-beta-D-manno-heptose. The polypeptide is Bifunctional protein HldE (Yersinia pseudotuberculosis serotype O:1b (strain IP 31758)).